Here is a 457-residue protein sequence, read N- to C-terminus: UPF0328 protein ECU05_0030 (457 aa).

2 disordered regions span residues 1–112 and 157–183; these read MPRP…PTAT and VKSQSVSHRAPITYQPPRPTTTSNPRI. Over residues 74–94 the composition is skewed to basic and acidic residues; that stretch reads HTEGCHTHEANPEPNTKHTET. Over residues 102-112 the composition is skewed to pro residues; the sequence is CPPPHPGPTAT.

It belongs to the UPF0328 family.

The polypeptide is UPF0328 protein ECU05_0030 (Encephalitozoon cuniculi (strain GB-M1) (Microsporidian parasite)).